The following is a 256-amino-acid chain: tRNA (guanine-N(7)-)-methyltransferase (256 aa).

The span at 1–15 (MVATGGQAQDQSHNQ) shows a compositional bias: polar residues. Residues 1 to 22 (MVATGGQAQDQSHNQEPGVLCP) form a disordered region. S-adenosyl-L-methionine-binding positions include glycine 79, 102–103 (EI), 137–138 (NA), and leucine 157. Aspartate 160 is a catalytic residue. 235-237 (SEE) serves as a coordination point for S-adenosyl-L-methionine.

Belongs to the class I-like SAM-binding methyltransferase superfamily. TrmB family.

The protein localises to the nucleus. The enzyme catalyses guanosine(46) in tRNA + S-adenosyl-L-methionine = N(7)-methylguanosine(46) in tRNA + S-adenosyl-L-homocysteine. It participates in tRNA modification; N(7)-methylguanine-tRNA biosynthesis. Its function is as follows. Catalyzes the formation of N(7)-methylguanine at position 46 (m7G46) in tRNA. This Drosophila yakuba (Fruit fly) protein is tRNA (guanine-N(7)-)-methyltransferase.